The chain runs to 327 residues: Leucotoxin LukD (327 aa).

A signal peptide spans 1 to 26 (MKIEKLGKSSVASSIALLLLSNTVDA).

The protein belongs to the aerolysin family. Toxicity requires sequential binding and synergistic association of a class S and a class F component which form heterooligomeric complexes. LukE (class S) associates with LukD (class F). LukD can also associate with HlgA.

The protein localises to the secreted. Functionally, part of a bi-component leucotoxin that acts by forming pores in the membrane of the target cells. LukE-LukD is as effective as the Panton-Valentine leucocidin (PVL) for inducing dermonecrosis when injected in the rabbit skin, but not hemolytic and poorly leucotoxic on human blood cells compared to other leucotoxins expressed by S.aureus. HlgA-LukD is a Ca(2+) channel inducer. The protein is Leucotoxin LukD (lukD) of Staphylococcus aureus.